Here is a 204-residue protein sequence, read N- to C-terminus: Small ribosomal subunit protein uS4 (204 aa).

The disordered stretch occupies residues 21–45 (GRPKSPINKREYGPGQHGQRRKKPS). The region spanning 93 to 156 (RRLDAVVYRM…KQLAMVLDSV (64 aa)) is the S4 RNA-binding domain.

The protein belongs to the universal ribosomal protein uS4 family. As to quaternary structure, part of the 30S ribosomal subunit. Contacts protein S5. The interaction surface between S4 and S5 is involved in control of translational fidelity.

In terms of biological role, one of the primary rRNA binding proteins, it binds directly to 16S rRNA where it nucleates assembly of the body of the 30S subunit. Functionally, with S5 and S12 plays an important role in translational accuracy. The protein is Small ribosomal subunit protein uS4 of Acidiphilium cryptum (strain JF-5).